Consider the following 65-residue polypeptide: uncharacterized protein (65 aa).

This is an uncharacterized protein from Acidianus filamentous virus 1 (isolate United States/Yellowstone) (AFV-1).